Reading from the N-terminus, the 169-residue chain is Superoxide dismutase [Cu-Zn] 1 (169 aa).

The N-terminal stretch at 1-18 (MFEQWDALCAVLFSFSIA) is a signal peptide. Cu cation is bound by residues His-65, His-67, and His-83. Cys-72 and Cys-165 are disulfide-bonded. Zn(2+) contacts are provided by His-83, His-91, His-100, and Asp-103. His-145 contacts Cu cation.

It belongs to the Cu-Zn superoxide dismutase family. Cu cation serves as cofactor. Requires Zn(2+) as cofactor.

It catalyses the reaction 2 superoxide + 2 H(+) = H2O2 + O2. In terms of biological role, destroys radicals which are normally produced within the cells and which are toxic to biological systems. This Aquifex aeolicus (strain VF5) protein is Superoxide dismutase [Cu-Zn] 1 (sodC1).